Here is a 539-residue protein sequence, read N- to C-terminus: Cytochrome c oxidase subunit 1 homolog (539 aa).

2 helical membrane passes run 28–48 (LFAA…LLLL) and 75–95 (GVMA…VVAL). His117 serves as a coordination point for heme b. A run of 11 helical transmembrane segments spans residues 118–138 (TSAV…FYVV), 154–174 (FVFW…LLGI), 187–207 (VDLW…GTIL), 214–234 (ISVA…LHIV), 265–285 (GHNA…YYFI), 298–318 (LSII…PHHL), 330–350 (LGMV…INGL), 368–388 (MMVM…MMSI), 402–422 (IGHV…GAIY), 443–463 (HFWL…VAGI), and 498–518 (LGGL…TMTI). Positions 266, 316, and 317 each coordinate Cu cation. Heme b contacts are provided by His404 and His406.

Belongs to the heme-copper respiratory oxidase family. Cu(2+) serves as cofactor. Requires heme b as cofactor.

It is found in the cell membrane. It catalyses the reaction 4 Fe(II)-[cytochrome c] + O2 + 8 H(+)(in) = 4 Fe(III)-[cytochrome c] + 2 H2O + 4 H(+)(out). It participates in energy metabolism; oxidative phosphorylation. Its function is as follows. Cytochrome c oxidase is the component of the respiratory chain that catalyzes the reduction of oxygen to water. Subunits 1-3 form the functional core of the enzyme complex. Co I is the catalytic subunit of the enzyme. Electrons originating in cytochrome c or a quinol are transferred to the bimetallic center formed by a high-spin heme and copper B. The chain is Cytochrome c oxidase subunit 1 homolog (fixN) from Agrobacterium tumefaciens (strain T37).